A 377-amino-acid chain; its full sequence is Probable glucokinase 2 (377 aa).

Residue Cys27–Ser32 participates in ATP binding.

This sequence belongs to the bacterial glucokinase family.

It carries out the reaction D-glucose + ATP = D-glucose 6-phosphate + ADP + H(+). The polypeptide is Probable glucokinase 2 (GK2) (Trichomonas vaginalis).